Reading from the N-terminus, the 426-residue chain is GTPase Obg (426 aa).

The region spanning 1 to 158 (MFVDEVEIKV…RSIRLELKLV (158 aa)) is the Obg domain. One can recognise an OBG-type G domain in the interval 159 to 330 (ADVGLIGFPN…LIYYTGDLLK (172 aa)). Residues 165–172 (GFPNVGKS), 190–194 (FTTLK), 212–215 (DIPG), 282–285 (NKID), and 311–313 (SAA) each bind GTP. Mg(2+)-binding residues include S172 and T192. Residues 349–426 (DFADEEENIV…IGPMEFEYME (78 aa)) enclose the OCT domain.

This sequence belongs to the TRAFAC class OBG-HflX-like GTPase superfamily. OBG GTPase family. In terms of assembly, monomer. Requires Mg(2+) as cofactor.

It localises to the cytoplasm. In terms of biological role, an essential GTPase which binds GTP, GDP and possibly (p)ppGpp with moderate affinity, with high nucleotide exchange rates and a fairly low GTP hydrolysis rate. Plays a role in control of the cell cycle, stress response, ribosome biogenesis and in those bacteria that undergo differentiation, in morphogenesis control. This chain is GTPase Obg, found in Halothermothrix orenii (strain H 168 / OCM 544 / DSM 9562).